Reading from the N-terminus, the 409-residue chain is Pyruvate dehydrogenase E1 component subunit alpha, mitochondrial (409 aa).

Thr-6 carries the phosphothreonine modification. His-109, Tyr-135, Arg-136, Ala-174, Gly-182, Val-184, Asp-213, Gly-214, Ala-215, Asn-242, and Tyr-244 together coordinate pyruvate. Residues Tyr-135 and Arg-136 each coordinate thiamine diphosphate. 6 residues coordinate thiamine diphosphate: Gly-182, Val-184, Asp-213, Gly-214, Ala-215, and Asn-242. Position 213 (Asp-213) interacts with Mg(2+). Residues Asn-242 and Tyr-244 each coordinate Mg(2+). Tyr-306 bears the Phosphotyrosine mark. His-309 provides a ligand contact to thiamine diphosphate. 2 positions are modified to phosphoserine: Ser-310 and Ser-312.

Tetramer of 2 alpha and 2 beta subunits. Requires thiamine diphosphate as cofactor. Mg(2+) serves as cofactor.

It is found in the mitochondrion matrix. It catalyses the reaction N(6)-[(R)-lipoyl]-L-lysyl-[protein] + pyruvate + H(+) = N(6)-[(R)-S(8)-acetyldihydrolipoyl]-L-lysyl-[protein] + CO2. E1 activity is regulated by phosphorylation (inactivation) and dephosphorylation (activation) of the alpha subunit. Functionally, the pyruvate dehydrogenase complex catalyzes the overall conversion of pyruvate to acetyl-CoA and CO(2). It contains multiple copies of three enzymatic components: pyruvate dehydrogenase (E1), dihydrolipoamide acetyltransferase (E2) and lipoamide dehydrogenase (E3). The chain is Pyruvate dehydrogenase E1 component subunit alpha, mitochondrial (pda1) from Schizosaccharomyces pombe (strain 972 / ATCC 24843) (Fission yeast).